We begin with the raw amino-acid sequence, 224 residues long: Putative cobalt transport protein CbiM (224 aa).

6 helical membrane passes run 8-28 (LPPLWCLIYYIICIPFIVYGI), 41-61 (AMPMLALSGAFMFILSSLKMP), 75-95 (FGAVFFGPAVVGVLSVIVLVF), 108-128 (LGANVLSMGIIGPLCGYAVWL), 138-158 (EIAMFFTAFVADLMTYVVTAI), and 169-189 (FFTALVTFLGIFAVTQIPLAI).

This sequence belongs to the CbiM family. In terms of assembly, forms an energy-coupling factor (ECF) transporter complex composed of an ATP-binding protein (A component, CbiO), a transmembrane protein (T component, CbiQ) and 2 possible substrate-capture proteins (S components, CbiM and CbiN) of unknown stoichimetry.

It localises to the cell membrane. It participates in cofactor biosynthesis; adenosylcobalamin biosynthesis. Its function is as follows. Part of the energy-coupling factor (ECF) transporter complex CbiMNOQ involved in cobalt import. The sequence is that of Putative cobalt transport protein CbiM from Methanosphaera stadtmanae (strain ATCC 43021 / DSM 3091 / JCM 11832 / MCB-3).